The primary structure comprises 506 residues: GMP synthase [glutamine-hydrolyzing] (506 aa).

The region spanning 2–190 (SIVILDFGSQ…FLDICGVTRD (189 aa)) is the Glutamine amidotransferase type-1 domain. The active-site Nucleophile is Cys79. Catalysis depends on residues His165 and Glu167. A GMPS ATP-PPase domain is found at 191–381 (WNAEHIVDEL…LGLPDHIRMR (191 aa)). 219–225 (SGGVDSS) contacts ATP.

Homodimer.

The catalysed reaction is XMP + L-glutamine + ATP + H2O = GMP + L-glutamate + AMP + diphosphate + 2 H(+). It functions in the pathway purine metabolism; GMP biosynthesis; GMP from XMP (L-Gln route): step 1/1. Functionally, catalyzes the synthesis of GMP from XMP. The sequence is that of GMP synthase [glutamine-hydrolyzing] (guaA) from Deinococcus radiodurans (strain ATCC 13939 / DSM 20539 / JCM 16871 / CCUG 27074 / LMG 4051 / NBRC 15346 / NCIMB 9279 / VKM B-1422 / R1).